Consider the following 325-residue polypeptide: MATERKPILLEFEKPLAELEAQINQVRQKSAELGVDVSDQIRELENNSTQLRQEIFSKLTPSQKLQLARHPRRPSTLDYIQAISDEWMELHGDRYGSDDPAIVAGVARLAGQPVVMLGQQKGRDTKDNVARNFGMASPSGYRKAIRIMEHADRFGMPILTFIDTPAAWAGIEAEQYGQGEAIAYNLREMFRLEVPIICTVIGEGGSGGALGIGVGDRLLMFEHAIYSVAPPEACAAILWRDAQKAPLAAEALKITAADLQKLGLIDEILPEPLGGAHVDPVGATEILKTSLIAHLRQLSQMSSPQRRELRYQKFRRMGIFTQSAA.

The CoA carboxyltransferase C-terminal domain maps to 43-297 (ELENNSTQLR…KTSLIAHLRQ (255 aa)).

Belongs to the AccA family. Acetyl-CoA carboxylase is a heterohexamer composed of biotin carboxyl carrier protein (AccB), biotin carboxylase (AccC) and two subunits each of ACCase subunit alpha (AccA) and ACCase subunit beta (AccD).

The protein localises to the cytoplasm. The catalysed reaction is N(6)-carboxybiotinyl-L-lysyl-[protein] + acetyl-CoA = N(6)-biotinyl-L-lysyl-[protein] + malonyl-CoA. The protein operates within lipid metabolism; malonyl-CoA biosynthesis; malonyl-CoA from acetyl-CoA: step 1/1. In terms of biological role, component of the acetyl coenzyme A carboxylase (ACC) complex. First, biotin carboxylase catalyzes the carboxylation of biotin on its carrier protein (BCCP) and then the CO(2) group is transferred by the carboxyltransferase to acetyl-CoA to form malonyl-CoA. The protein is Acetyl-coenzyme A carboxylase carboxyl transferase subunit alpha of Cyanothece sp. (strain PCC 7425 / ATCC 29141).